The chain runs to 186 residues: Elongation factor P (186 aa).

This sequence belongs to the elongation factor P family.

Its subcellular location is the cytoplasm. It functions in the pathway protein biosynthesis; polypeptide chain elongation. Functionally, involved in peptide bond synthesis. Stimulates efficient translation and peptide-bond synthesis on native or reconstituted 70S ribosomes in vitro. Probably functions indirectly by altering the affinity of the ribosome for aminoacyl-tRNA, thus increasing their reactivity as acceptors for peptidyl transferase. The polypeptide is Elongation factor P (Streptococcus pneumoniae (strain Hungary19A-6)).